A 530-amino-acid chain; its full sequence is Chaperonin GroEL 2 (530 aa).

Residues 30–33, Lys-51, 87–91, Gly-415, 479–481, and Asp-495 contribute to the ATP site; these read TLGP, DGTTT, and NAA.

This sequence belongs to the chaperonin (HSP60) family. As to quaternary structure, forms a cylinder of 14 subunits composed of two heptameric rings stacked back-to-back. Interacts with the co-chaperonin GroES.

The protein localises to the cytoplasm. It carries out the reaction ATP + H2O + a folded polypeptide = ADP + phosphate + an unfolded polypeptide.. Its function is as follows. Together with its co-chaperonin GroES, plays an essential role in assisting protein folding. The GroEL-GroES system forms a nano-cage that allows encapsulation of the non-native substrate proteins and provides a physical environment optimized to promote and accelerate protein folding. In Vibrio cholerae serotype O1 (strain ATCC 39315 / El Tor Inaba N16961), this protein is Chaperonin GroEL 2.